Here is a 1131-residue protein sequence, read N- to C-terminus: DNA polymerase II large subunit (1131 aa).

This sequence belongs to the archaeal DNA polymerase II family. Heterodimer of a large subunit and a small subunit.

It catalyses the reaction DNA(n) + a 2'-deoxyribonucleoside 5'-triphosphate = DNA(n+1) + diphosphate. The enzyme catalyses Exonucleolytic cleavage in the 3'- to 5'-direction to yield nucleoside 5'-phosphates.. Its function is as follows. Possesses two activities: a DNA synthesis (polymerase) and an exonucleolytic activity that degrades single-stranded DNA in the 3'- to 5'-direction. Has a template-primer preference which is characteristic of a replicative DNA polymerase. The protein is DNA polymerase II large subunit of Methanococcus maripaludis (strain C7 / ATCC BAA-1331).